A 313-amino-acid polypeptide reads, in one-letter code: Porphobilinogen deaminase (313 aa).

Cys-242 is subject to S-(dipyrrolylmethanemethyl)cysteine.

It belongs to the HMBS family. As to quaternary structure, monomer. Requires dipyrromethane as cofactor.

It carries out the reaction 4 porphobilinogen + H2O = hydroxymethylbilane + 4 NH4(+). It functions in the pathway porphyrin-containing compound metabolism; protoporphyrin-IX biosynthesis; coproporphyrinogen-III from 5-aminolevulinate: step 2/4. Functionally, tetrapolymerization of the monopyrrole PBG into the hydroxymethylbilane pre-uroporphyrinogen in several discrete steps. The protein is Porphobilinogen deaminase of Pseudomonas aeruginosa (strain LESB58).